Here is a 273-residue protein sequence, read N- to C-terminus: Manganese catalase (273 aa).

Glu-35 is a Mn(2+) binding site. Residues Asp-57 and Asp-61 each contribute to the Ca(2+) site. The Mn(2+) site is built by Glu-66, His-69, Glu-149, and His-182. 3 residues coordinate Ca(2+): Asn-220, Ser-222, and Gly-224. The disordered stretch occupies residues Glu-254 to Glu-273.

Belongs to the manganese catalase family. It depends on Ca(2+) as a cofactor. Mn(2+) is required as a cofactor.

The enzyme catalyses 2 H2O2 = O2 + 2 H2O. Catalyzes the decomposition of hydrogen peroxide into water and oxygen. In Bacillus subtilis (strain 168), this protein is Manganese catalase (ydbD).